The primary structure comprises 360 residues: Fructose-bisphosphate aldolase 1 (360 aa).

S63 is a binding site for D-glyceraldehyde 3-phosphate. D110 functions as the Proton donor in the catalytic mechanism. 4 residues coordinate Zn(2+): H111, D145, E175, and H227. G228 contributes to the dihydroxyacetone phosphate binding site. H266 lines the Zn(2+) pocket. 267-269 is a binding site for dihydroxyacetone phosphate; it reads GGS.

This sequence belongs to the class II fructose-bisphosphate aldolase family. Homodimer. Requires Zn(2+) as cofactor.

The enzyme catalyses beta-D-fructose 1,6-bisphosphate = D-glyceraldehyde 3-phosphate + dihydroxyacetone phosphate. The protein operates within carbohydrate degradation; glycolysis; D-glyceraldehyde 3-phosphate and glycerone phosphate from D-glucose: step 4/4. Functionally, catalyzes the aldol condensation of dihydroxyacetone phosphate (DHAP or glycerone-phosphate) with glyceraldehyde 3-phosphate (G3P) to form fructose 1,6-bisphosphate (FBP) in gluconeogenesis and the reverse reaction in glycolysis. The chain is Fructose-bisphosphate aldolase 1 (FBA1) from Paracoccidioides lutzii (strain ATCC MYA-826 / Pb01) (Paracoccidioides brasiliensis).